A 128-amino-acid polypeptide reads, in one-letter code: Large ribosomal subunit protein eL22 (128 aa).

Phosphothreonine is present on T62. A Phosphoserine modification is found at S66. K69 is subject to N6-succinyllysine.

The protein belongs to the eukaryotic ribosomal protein eL22 family. In terms of assembly, component of the large ribosomal subunit.

The protein resides in the cytoplasm. In terms of biological role, component of the large ribosomal subunit. The ribosome is a large ribonucleoprotein complex responsible for the synthesis of proteins in the cell. The sequence is that of Large ribosomal subunit protein eL22 (Rpl22) from Rattus norvegicus (Rat).